Here is a 432-residue protein sequence, read N- to C-terminus: Short transient receptor potential channel 2 homolog (432 aa).

The next 4 membrane-spanning stretches (helical) occupy residues Met1–Ala21, Phe52–Ile72, Phe96–Val116, and Leu162–Ile182. Residues Gln356–Thr432 form a disordered region. Residues Ala387–Ala404 show a composition bias toward low complexity.

The protein belongs to the transient receptor (TC 1.A.4) family. STrpC subfamily. TRPC2 sub-subfamily.

It is found in the membrane. In terms of biological role, thought to form a receptor-activated calcium permeant cation channel. This is Short transient receptor potential channel 2 homolog (TRPC2) from Bos taurus (Bovine).